We begin with the raw amino-acid sequence, 181 residues long: SELKVATQTGFVRGLSLPVLAGHVSAHLGVPFAEPFLRPEPVKPGAEMWNPNLNIWVPSGRVGAFXFLTVTLFGESAGAASVGMXLLSTQRAILQSGAPNAPWAQVQPAESRFPFVPVIDGEFFPLGVNKDEGSFGVPGFSKXXESLINQAVPHANDIYTDWQDQDNGGLPLTGNPTXPHN.

The Acyl-ester intermediate role is filled by S76. The active-site Charge relay system is E132. Positions 162–181 are disordered; that stretch reads WQDQDNGGLPLTGNPTXPHN.

This sequence belongs to the type-B carboxylesterase/lipase family. Post-translationally, the N-terminus is blocked. As to expression, expressed by the venom gland. Is also probably expressed by liver and muscle.

The protein localises to the synapse. The protein resides in the secreted. Its subcellular location is the cell membrane. The catalysed reaction is acetylcholine + H2O = choline + acetate + H(+). In terms of biological role, in venom, its toxic role is unclear: it could result in less musculatory control by rapidly hydrolyzing acetylcholine, or that it works synergistically with alkaline phosphatase (ALP) in paralyzing prey through hypotension. In muscle, it terminates signal transduction at the neuromuscular junction by rapid hydrolysis of the acetylcholine released into the synaptic cleft. In liver, its function is unclear: it could serve as a safeguard against any diffusion of acetylcholine from synapses into the circulation. This chain is Acetylcholinesterase (ACHE), found in Naja oxiana (Central Asian cobra).